Consider the following 327-residue polypeptide: Phenylalanine--tRNA ligase alpha subunit (327 aa).

Glu252 is a Mg(2+) binding site.

This sequence belongs to the class-II aminoacyl-tRNA synthetase family. Phe-tRNA synthetase alpha subunit type 1 subfamily. As to quaternary structure, tetramer of two alpha and two beta subunits. Mg(2+) is required as a cofactor.

The protein resides in the cytoplasm. It carries out the reaction tRNA(Phe) + L-phenylalanine + ATP = L-phenylalanyl-tRNA(Phe) + AMP + diphosphate + H(+). This Photobacterium profundum (strain SS9) protein is Phenylalanine--tRNA ligase alpha subunit.